Here is a 632-residue protein sequence, read N- to C-terminus: Palmitoyltransferase ZDHHC17 (632 aa).

At methionine 1–lysine 304 the chain is on the cytoplasmic side. Positions methionine 11–valine 305 are necessary and sufficient for interaction with DNAJC5 and SNAP25. 7 ANK repeats span residues threonine 51–proline 86, glutamate 89–glutamine 118, leucine 123–leucine 152, glutamate 156–methionine 185, asparagine 189–leucine 219, histidine 224–alanine 253, and lysine 257–tyrosine 286. A run of 2 helical transmembrane segments spans residues valine 305 to isoleucine 325 and aspartate 326 to serine 346. At lysine 347 to alanine 357 the chain is on the cytoplasmic side. Residues leucine 358 to phenylalanine 378 traverse the membrane as a helical segment. At tryptophan 379–aspartate 381 the chain is on the lumenal side. The chain crosses the membrane as a helical span at residues leucine 382 to phenylalanine 402. At glycine 403 to arginine 480 the chain is on the cytoplasmic side. The DHHC domain occupies isoleucine 437 to phenylalanine 487. Catalysis depends on cysteine 467, which acts as the S-palmitoyl cysteine intermediate. Residues tyrosine 481 to isoleucine 501 traverse the membrane as a helical segment. Over serine 502–proline 529 the chain is Lumenal. Residues tryptophan 530 to methionine 550 form a helical membrane-spanning segment. At cysteine 551–valine 632 the chain is on the cytoplasmic side.

It belongs to the DHHC palmitoyltransferase family. AKR/ZDHHC17 subfamily. Interacts (via ANK repeats) with numerous proteins (via the consensus sequence motif [VIAP]-[VIT]-x-x-Q-P). Interacts (via ANK repeats) with CLIP3. Interacts (via ANK repeats) with HTT; this interaction is inversely correlated to the length of the polyglutamine tract added to the huntingtin protein in Huntington disease. Interacts (via ANK repeats) with DNAJC5 (via C-terminus). Interacts (via ANK repeats) with MAP6. Interacts (via ANK repeats) with SNAP23. Interacts (via ANK repeats) with SNAP25. Interacts (via ANK repeats) with EVL. Interacts with SPRED1 and SPRED3. Interacts with GPM6A and OPTN. May interact (via ANK repeats) with SPRED2. May interact with NTRK1; may regulate its localization and function. Autopalmitoylated. Autopalmitoylation has a regulatory role in ZDHHC17-mediated Mg(2+) transport. In terms of tissue distribution, expressed in all brain regions. Expression is highest in the cortex, cerebellum, occipital lobe and caudate and lowest in the spinal cord. Expression is also seen in testis, pancreas, heart and kidney.

It is found in the golgi apparatus membrane. The protein localises to the cytoplasmic vesicle membrane. Its subcellular location is the presynaptic cell membrane. The catalysed reaction is L-cysteinyl-[protein] + hexadecanoyl-CoA = S-hexadecanoyl-L-cysteinyl-[protein] + CoA. The enzyme catalyses L-cysteinyl-[protein] + tetradecanoyl-CoA = S-tetradecanoyl-L-cysteinyl-[protein] + CoA. It carries out the reaction L-cysteinyl-[protein] + octadecanoyl-CoA = S-octadecanoyl-L-cysteinyl-[protein] + CoA. Its function is as follows. Palmitoyltransferase that catalyzes the addition of palmitate onto various protein substrates and is involved in a variety of cellular processes. Has no stringent fatty acid selectivity and in addition to palmitate can also transfer onto target proteins myristate from tetradecanoyl-CoA and stearate from octadecanoyl-CoA. Palmitoyltransferase specific for a subset of neuronal proteins, including SNAP25, DLG4/PSD95, GAD2, SYT1 and HTT. Also palmitoylates neuronal protein GPM6A as well as SPRED1 and SPRED3. Could also play a role in axonogenesis through the regulation of NTRK1 and the downstream ERK1/ERK2 signaling cascade. May be involved in the sorting or targeting of critical proteins involved in the initiating events of endocytosis at the plasma membrane. May play a role in Mg(2+) transport. Could also palmitoylate DNAJC5 and regulate its localization to the Golgi membrane. Palmitoylates CASP6, thereby preventing its dimerization and subsequent activation. This chain is Palmitoyltransferase ZDHHC17, found in Homo sapiens (Human).